A 206-amino-acid chain; its full sequence is MEPLASNIQVLLQAAEFLERREREAEHGYASLCPHRSPGPIHRRKKRPPQAPGAQDSGRSVHNELEKRRRAQLKRCLERLKQQMPLGADCARYTTLSLLRRARMHIQKLEDQEQRARQLKERLRSKQQSLQRQLEQLRGLAGAAERERLRADSLDSSGLSSERSDSDQEELEVDVESLVFGGEAELLRGFVAGQEHSYSHGGGAWL.

Residues 8–25 (IQVLLQAAEFLERREREA) form an interaction with SIN3A and SIN3B region. Disordered stretches follow at residues 25–67 (AEHG…ELEK) and 146–171 (RERLRADSLDSSGLSSERSDSDQEEL). The bHLH domain maps to 57–109 (SGRSVHNELEKRRRAQLKRCLERLKQQMPLGADCARYTTLSLLRRARMHIQKL).

In terms of assembly, efficient DNA binding requires dimerization with another bHLH protein. Binds DNA as a heterodimer with MAX. Interacts with SIN3A AND SIN3B. Interacts with RNF17.

The protein localises to the nucleus. Transcriptional repressor. Binds with MAX to form a sequence-specific DNA-binding protein complex which recognizes the core sequence 5'-CAC[GA]TG-3'. Antagonizes MYC transcriptional activity by competing for MAX and suppresses MYC dependent cell transformation. The polypeptide is Max dimerization protein 3 (MXD3) (Homo sapiens (Human)).